A 386-amino-acid chain; its full sequence is Ethanolamine kinase 2 (386 aa).

The protein belongs to the choline/ethanolamine kinase family. In terms of tissue distribution, expressed in kidney, liver, ovary, testis and prostate.

The enzyme catalyses ethanolamine + ATP = phosphoethanolamine + ADP + H(+). It functions in the pathway phospholipid metabolism; phosphatidylethanolamine biosynthesis; phosphatidylethanolamine from ethanolamine: step 1/3. Functionally, highly specific for ethanolamine phosphorylation. Does not have choline kinase activity. In Homo sapiens (Human), this protein is Ethanolamine kinase 2 (ETNK2).